The sequence spans 227 residues: MACPVQLGFQDAASPIMEELTYFHDHTLMIVFLISSLVLYIISLMLTTELTHTSTMDAQEVETVWTILPAVILILIALPSLRILYMMDEITTPSLTLKTMGHQWYWSYEYTDYENLCFDSYMTPSSDLKPGELRLLEVDNRVVLPTEMSIRMLISSEDVLHSWTVPSLGVKTDAIPGRLNQATLMTSRPGIYYGQCSEICGANHSFMPIVLELVPLKHFEEWLLAML.

Residues 1–14 lie on the Mitochondrial intermembrane side of the membrane; that stretch reads MACPVQLGFQDAAS. Residues 15-45 form a helical membrane-spanning segment; that stretch reads PIMEELTYFHDHTLMIVFLISSLVLYIISLM. Topologically, residues 46 to 59 are mitochondrial matrix; it reads LTTELTHTSTMDAQ. A helical membrane pass occupies residues 60-87; it reads EVETVWTILPAVILILIALPSLRILYMM. Over 88-227 the chain is Mitochondrial intermembrane; that stretch reads DEITTPSLTL…HFEEWLLAML (140 aa). Residues H161, C196, E198, C200, H204, and M207 each contribute to the Cu cation site. Residue E198 coordinates Mg(2+).

Belongs to the cytochrome c oxidase subunit 2 family. In terms of assembly, component of the cytochrome c oxidase (complex IV, CIV), a multisubunit enzyme composed of 14 subunits. The complex is composed of a catalytic core of 3 subunits MT-CO1, MT-CO2 and MT-CO3, encoded in the mitochondrial DNA, and 11 supernumerary subunits COX4I, COX5A, COX5B, COX6A, COX6B, COX6C, COX7A, COX7B, COX7C, COX8 and NDUFA4, which are encoded in the nuclear genome. The complex exists as a monomer or a dimer and forms supercomplexes (SCs) in the inner mitochondrial membrane with NADH-ubiquinone oxidoreductase (complex I, CI) and ubiquinol-cytochrome c oxidoreductase (cytochrome b-c1 complex, complex III, CIII), resulting in different assemblies (supercomplex SCI(1)III(2)IV(1) and megacomplex MCI(2)III(2)IV(2)). Found in a complex with TMEM177, COA6, COX18, COX20, SCO1 and SCO2. Interacts with TMEM177 in a COX20-dependent manner. Interacts with COX20. Interacts with COX16. Requires Cu cation as cofactor.

It is found in the mitochondrion inner membrane. It catalyses the reaction 4 Fe(II)-[cytochrome c] + O2 + 8 H(+)(in) = 4 Fe(III)-[cytochrome c] + 2 H2O + 4 H(+)(out). Component of the cytochrome c oxidase, the last enzyme in the mitochondrial electron transport chain which drives oxidative phosphorylation. The respiratory chain contains 3 multisubunit complexes succinate dehydrogenase (complex II, CII), ubiquinol-cytochrome c oxidoreductase (cytochrome b-c1 complex, complex III, CIII) and cytochrome c oxidase (complex IV, CIV), that cooperate to transfer electrons derived from NADH and succinate to molecular oxygen, creating an electrochemical gradient over the inner membrane that drives transmembrane transport and the ATP synthase. Cytochrome c oxidase is the component of the respiratory chain that catalyzes the reduction of oxygen to water. Electrons originating from reduced cytochrome c in the intermembrane space (IMS) are transferred via the dinuclear copper A center (CU(A)) of subunit 2 and heme A of subunit 1 to the active site in subunit 1, a binuclear center (BNC) formed by heme A3 and copper B (CU(B)). The BNC reduces molecular oxygen to 2 water molecules using 4 electrons from cytochrome c in the IMS and 4 protons from the mitochondrial matrix. This Cheirogaleus medius (Fat-tailed dwarf lemur) protein is Cytochrome c oxidase subunit 2 (MT-CO2).